We begin with the raw amino-acid sequence, 538 residues long: Adenine deaminase (538 aa).

This sequence belongs to the metallo-dependent hydrolases superfamily. Adenine deaminase family. Requires Mn(2+) as cofactor.

It catalyses the reaction adenine + H2O + H(+) = hypoxanthine + NH4(+). This Methanothermobacter thermautotrophicus (strain ATCC 29096 / DSM 1053 / JCM 10044 / NBRC 100330 / Delta H) (Methanobacterium thermoautotrophicum) protein is Adenine deaminase.